Here is a 477-residue protein sequence, read N- to C-terminus: Tripartite motif-containing protein 72 (477 aa).

Positions 14, 17, 29, 31, 34, 37, 53, 56, 86, 89, 97, 100, 105, 108, 114, and 117 each coordinate Zn(2+). Residues 16-59 (CQLCLELFRAPVTPECGHTFCQGCLTGVPKNQDQNGSTPCPTCQ) form an RING-type zinc finger. Residues 83-124 (VPQGHCLEHMDPLSVYCEQDKELICGVCASLGKHKGHNIITA) form a B box-type zinc finger. Residues 135–232 (LPQQQVILQE…QMEGVLKDVE (98 aa)) are a coiled coil. Residues 272 to 476 (DEFKFQVWRK…LKIFYPPAEQ (205 aa)) enclose the B30.2/SPRY domain.

The protein belongs to the TRIM/RBCC family. As to quaternary structure, homodimer. Homooligomer; disulfide-linked. Oligomerizes on the phospholipid membrane. In terms of processing, disulfide bond formation at Cys-244 occurs in case of membrane damage that cause the entry of the oxidized milieu of the extracellular space, resulting in homooligomerization.

It localises to the cell membrane. The protein resides in the sarcolemma. The protein localises to the cytoplasmic vesicle membrane. The enzyme catalyses S-ubiquitinyl-[E2 ubiquitin-conjugating enzyme]-L-cysteine + [acceptor protein]-L-lysine = [E2 ubiquitin-conjugating enzyme]-L-cysteine + N(6)-ubiquitinyl-[acceptor protein]-L-lysine.. It functions in the pathway protein modification; protein ubiquitination. With respect to regulation, specifically binds phosphatidylserine. The binding to phospholipids enhances ubiquitination activity. Muscle-specific E3 ubiquitin-protein ligase that plays a central role in cell membrane repair by nucleating the assembly of the repair machinery at injury sites. Acts as a sensor of oxidation: upon membrane damage, entry of extracellular oxidative environment results in disulfide bond formation and homooligomerization at the injury site. This oligomerization acts as a nucleation site for recruitment of TRIM72-containing vesicles to the injury site, leading to membrane patch formation. Probably acts upstream of the Ca(2+)-dependent membrane resealing process. Required for transport of DYSF to sites of cell injury during repair patch formation. Regulates membrane budding and exocytosis. May be involved in the regulation of the mobility of KCNB1-containing endocytic vesicles. This chain is Tripartite motif-containing protein 72 (trim72), found in Xenopus laevis (African clawed frog).